We begin with the raw amino-acid sequence, 284 residues long: Pantothenate synthetase (284 aa).

Residue 30 to 37 (MGNLHDGH) participates in ATP binding. The active-site Proton donor is the H37. A (R)-pantoate-binding site is contributed by Q61. Residue Q61 coordinates beta-alanine. Residue 149–152 (GEKD) participates in ATP binding. A (R)-pantoate-binding site is contributed by Q155. ATP contacts are provided by residues I178 and 186 to 189 (LSSR).

Belongs to the pantothenate synthetase family. Homodimer.

The protein localises to the cytoplasm. It catalyses the reaction (R)-pantoate + beta-alanine + ATP = (R)-pantothenate + AMP + diphosphate + H(+). It participates in cofactor biosynthesis; (R)-pantothenate biosynthesis; (R)-pantothenate from (R)-pantoate and beta-alanine: step 1/1. Functionally, catalyzes the condensation of pantoate with beta-alanine in an ATP-dependent reaction via a pantoyl-adenylate intermediate. This Salmonella paratyphi B (strain ATCC BAA-1250 / SPB7) protein is Pantothenate synthetase.